A 369-amino-acid chain; its full sequence is tRNA pseudouridine synthase D (369 aa).

Asp80 functions as the Nucleophile in the catalytic mechanism. The TRUD domain maps to 156-318 (GIPNWFGEQR…LKQERRALRL (163 aa)).

This sequence belongs to the pseudouridine synthase TruD family.

It catalyses the reaction uridine(13) in tRNA = pseudouridine(13) in tRNA. Responsible for synthesis of pseudouridine from uracil-13 in transfer RNAs. The polypeptide is tRNA pseudouridine synthase D (Xanthomonas oryzae pv. oryzae (strain KACC10331 / KXO85)).